We begin with the raw amino-acid sequence, 924 residues long: MPPFTYSDDTLRSGRDRFRDHSPSQHRRSMSQETDSSASTTSIVFDRIQERLDTKEFTPRGTDGDDDGSLKDELNNDDLETGPFLGNADSSSRSDQRSPGDGQRMDRSLRRWLFIVSGVLVATWVIGLFVFVSSKAYKPSSSFAHDPQATVTHGTGKKVTLDQVLNNQWRAKSHSISWIAGANGEDGLLLEKEGVGKDYLVVEDVRAQNPSSVQASKSKALIKEKLFEFANKTYWPSITVPSRDLKKVLLATDVKNNWRHSYYAVYWIFDVETQQVEPLVPYDVEARLQLASWSPTSDAIVYTRDNNMFLRKLGSDKIVQITRDGSADVFNGVPDWVYEEEVLASGVATWWSEDGQYVAFLRTNETGVPEYPIQYFVSRPSGEEPKPGEENYPEVRQIKYPKAGAHNPIVDLKFYDVKRGDVFSVDISGRFADDDRLITEVVWAGKQVLIKETNRVSDVMRVVLVDVGSRTGKAVRTVDVNAIDGGWFEISHKTKFIPADPVNGRPDDGYVDTIIHDNGDHLAYFTPLDNPEPIMLTSGDYEVVDAPSAVDLQRNLVYFVSTKESSIQRHVYQVKLTGEDMTPVTDTSKEGYYAISFSTGAGYAMVSYQGPDIPWQKVISTPSNPDKYEYVVEENKDLAEAAKKHELPINIYGTINVDGVDLNYVERRPPHFDKNKKYPVLFQQYSGPVSQTVKKTFAVDFQSFVAAGLGYICVTVDGRGTGFIGRKNRVIIRGDLGHWESHDQIAAAKHWAQKDYIDEDRLAIWGWSYGGYMTLKTLEQDAGQTFKYGMAVAPVTDWRFYDSIYTERYMRTPQTNLEGYDSAAVTNATALSQNVRFLLMHGVADDNVHMQNSLTLLDALDQRSVENYDVHVFPDSDHGIYFHNANRIVFDKLTNWLVNAFNGEWLKIANAQPNGMKKRAAPTA.

Residues 1 to 104 are disordered; it reads MPPFTYSDDT…DQRSPGDGQR (104 aa). Topologically, residues 1–111 are cytoplasmic; the sequence is MPPFTYSDDT…GQRMDRSLRR (111 aa). The span at 9–23 shows a compositional bias: basic and acidic residues; the sequence is DTLRSGRDRFRDHSP. The span at 31–43 shows a compositional bias: polar residues; the sequence is SQETDSSASTTSI. 2 stretches are compositionally biased toward basic and acidic residues: residues 47–58 and 92–104; these read RIQERLDTKEFT and SRSD…DGQR. Residues 112-132 traverse the membrane as a helical; Signal-anchor for type II membrane protein segment; sequence WLFIVSGVLVATWVIGLFVFV. The Vacuolar portion of the chain corresponds to 133 to 924; that stretch reads SSKAYKPSSS…GMKKRAAPTA (792 aa). Residues Asn231 and Asn364 are each glycosylated (N-linked (GlcNAc...) asparagine). The active-site Charge relay system is the Ser768. The N-linked (GlcNAc...) asparagine glycan is linked to Asn827. Catalysis depends on charge relay system residues Asp845 and His878.

Belongs to the peptidase S9B family.

Its subcellular location is the vacuole membrane. It carries out the reaction Release of an N-terminal dipeptide, Xaa-Yaa-|-Zaa-, from a polypeptide, preferentially when Yaa is Pro, provided Zaa is neither Pro nor hydroxyproline.. In terms of biological role, type IV dipeptidyl-peptidase which removes N-terminal dipeptides sequentially from polypeptides having unsubstituted N-termini provided that the penultimate residue is proline. In Sordaria macrospora (strain ATCC MYA-333 / DSM 997 / K(L3346) / K-hell), this protein is Probable dipeptidyl-aminopeptidase B (DAPB).